The sequence spans 413 residues: Calsequestrin-2 (413 aa).

Residues methionine 1–alanine 19 form the signal peptide. Tyrosine 282 is modified (phosphotyrosine). The N-linked (GlcNAc...) asparagine glycan is linked to asparagine 335. The interval valine 365–glutamate 413 is disordered. Residues glutamate 373–glutamate 413 show a composition bias toward acidic residues. 2 positions are modified to phosphoserine: serine 398 and serine 405.

It belongs to the calsequestrin family. As to quaternary structure, monomer, homodimer and homooligomer. Mostly monomeric in the absence of calcium. Forms higher oligomers in a calcium-dependent manner. Dimers associate to form tetramers, that then form linear homomer chains. Interacts with ASPH and TRDN. In terms of processing, phosphorylation in the C-terminus, probably by CK2, moderately increases calcium buffering capacity. N-glycosylated. As to expression, detected in stomach and vas deferens (at protein level).

It localises to the sarcoplasmic reticulum lumen. Functionally, calsequestrin is a high-capacity, moderate affinity, calcium-binding protein and thus acts as an internal calcium store in muscle. Calcium ions are bound by clusters of acidic residues at the protein surface, especially at the interface between subunits. Can bind around 60 Ca(2+) ions. Regulates the release of lumenal Ca(2+) via the calcium release channel RYR2; this plays an important role in triggering muscle contraction. Plays a role in excitation-contraction coupling in the heart and in regulating the rate of heart beats. The polypeptide is Calsequestrin-2 (Casq2) (Rattus norvegicus (Rat)).